Consider the following 306-residue polypeptide: Probable rRNA-processing protein EBP2 (306 aa).

M1 carries the post-translational modification N-acetylmethionine. Disordered stretches follow at residues 1–20 (MDTP…LASD), 75–103 (GPVP…DDFQ), and 150–169 (IRQK…KAKQ). Phosphothreonine is present on T3. Phosphoserine occurs at positions 7, 9, 11, and 13. Residues 81-90 (SETQPTPQNQ) show a composition bias toward polar residues. Residues 91–103 (DQKKGVNPEDDFQ) are compositionally biased toward basic and acidic residues. K93 participates in a covalent cross-link: Glycyl lysine isopeptide (Lys-Gly) (interchain with G-Cter in SUMO2). Positions 135 to 171 (DYFAEMAKSDQQMQKIRQKLQTKQAAMEKSEKAKQLR) form a coiled coil. Glycyl lysine isopeptide (Lys-Gly) (interchain with G-Cter in SUMO2) cross-links involve residues K179 and K218. Basic and acidic residues predominate over residues 213 to 224 (LEGDQKPVERSA). A disordered region spans residues 213–306 (LEGDQKPVER…ARQKLKSKAR (94 aa)). S264 and S270 each carry phosphoserine. Residues 274 to 306 (KVAHGKGSRRPGKKGANKRPGKRARQKLKSKAR) show a composition bias toward basic residues.

It belongs to the EBP2 family. As to quaternary structure, interacts with WDR46.

The protein localises to the nucleus. It is found in the nucleolus. Required for the processing of the 27S pre-rRNA. The polypeptide is Probable rRNA-processing protein EBP2 (Ebna1bp2) (Mus musculus (Mouse)).